A 99-amino-acid chain; its full sequence is MLIVLFRSKDIRGGRFVRPILIFRTKRSWILFRIGPERRREAEMPTDLCLFSNSPDPIVPVFGTSSAKVTEWVSHQSNPFDKSGVILDIIFYIYRNIIE.

This sequence belongs to the ycf15 family.

It localises to the plastid. It is found in the chloroplast. This is an uncharacterized protein from Saccharum hybrid (Sugarcane).